An 863-amino-acid chain; its full sequence is Receptor-like protein 9DC3 (863 aa).

Residues 1-21 (MGCVKLVFFMLYVFLFQLVSS) form the signal peptide. The Extracellular portion of the chain corresponds to 22–812 (SSLPHLCPED…EEDSPMISWQ (791 aa)). The N-cap stretch occupies residues 24–90 (LPHLCPEDQA…GVHCDETTGQ (67 aa)). N-linked (GlcNAc...) asparagine glycosylation is found at Asn-71 and Asn-108. One copy of the LRR 1; degenerate repeat lies at 91–114 (VIALDLRCSQLQGKFHSNSSLFQL). LRR repeat units lie at residues 115 to 138 (SNLK…KFGE) and 140 to 163 (SDLT…ISHL). An LRR 4; degenerate repeat occupies 164–190 (SKLHVLLIGDQYGLSIVPHNFEPLLKN). N-linked (GlcNAc...) asparagine glycans are attached at residues Asn-190, Asn-203, and Asn-211. LRR repeat units lie at residues 191-213 (LTQL…SNFS), 214-237 (SHLT…VFHL), 240-262 (LEFL…KWNS), 264-286 (ASLM…SFSH), 287-311 (LTSL…LWNL), and 312-336 (TNIE…IFEK). Residue Asn-261 is glycosylated (N-linked (GlcNAc...) asparagine). N-linked (GlcNAc...) asparagine glycosylation is found at Asn-299 and Asn-310. The LRR 11; degenerate repeat unit spans residues 337 to 357 (LKKLSLFRNDNLDGGLEFLSF). 15 LRR repeats span residues 358 to 382 (NTQL…ISGL), 383 to 406 (QNLE…IFSL), 408 to 428 (SLVE…EFKS), 429 to 452 (KTLS…LLNQ), 454 to 476 (NLQL…ICNL), 477 to 500 (KTLI…VVER), 502 to 524 (EYLS…TFSV), 525 to 549 (GNIL…LINC), 551 to 572 (YLAL…WLGH), 573 to 597 (LSQL…GNTN), 599 to 623 (FTRL…ILGN), 667 to 690 (LDSN…IIGD), 691 to 714 (LVGL…SFQN), 715 to 739 (LSVL…LASL), and 741 to 759 (FLEV…IPKG). N-linked (GlcNAc...) asparagine glycosylation is found at Asn-378, Asn-396, and Asn-416. N-linked (GlcNAc...) asparagine glycosylation occurs at Asn-464. Asn-519 carries N-linked (GlcNAc...) asparagine glycosylation. Asn-563 carries an N-linked (GlcNAc...) asparagine glycan. 3 N-linked (GlcNAc...) asparagine glycosylation sites follow: Asn-674, Asn-698, and Asn-714. Asn-746 and Asn-767 each carry an N-linked (GlcNAc...) asparagine glycan. The segment at 760–812 (KQFDSFGNTSYQGNDGLCGFPLSKLCGGDDQVTTPAELDQEEEEEDSPMISWQ) is C-cap/acidic domain. Residues 813–833 (GVLVGYGCGLVIGLSVIYIMW) form a helical membrane-spanning segment. Residues 834 to 863 (STQYPAWFSRMHLKLEQIVTTRMKKHKKRY) are Cytoplasmic-facing.

This sequence belongs to the RLP family.

It localises to the cell membrane. Its function is as follows. Involved in plant defense. Confers resistance to the fungal pathogen C.fulvum through recognition of the AVR9 elicitor protein. In Solanum pimpinellifolium (Currant tomato), this protein is Receptor-like protein 9DC3.